The following is a 215-amino-acid chain: 3-demethoxyubiquinol 3-hydroxylase (215 aa).

Positions 64, 94, 97, 146, 178, and 181 each coordinate Fe cation.

Belongs to the COQ7 family. Requires Fe cation as cofactor.

Its subcellular location is the cell membrane. The catalysed reaction is a 5-methoxy-2-methyl-3-(all-trans-polyprenyl)benzene-1,4-diol + AH2 + O2 = a 3-demethylubiquinol + A + H2O. The protein operates within cofactor biosynthesis; ubiquinone biosynthesis. Catalyzes the hydroxylation of 2-nonaprenyl-3-methyl-6-methoxy-1,4-benzoquinol during ubiquinone biosynthesis. The protein is 3-demethoxyubiquinol 3-hydroxylase of Pseudomonas savastanoi pv. phaseolicola (strain 1448A / Race 6) (Pseudomonas syringae pv. phaseolicola (strain 1448A / Race 6)).